Here is a 488-residue protein sequence, read N- to C-terminus: Probable malate:quinone oxidoreductase (488 aa).

Belongs to the MQO family. The cofactor is FAD.

The enzyme catalyses (S)-malate + a quinone = a quinol + oxaloacetate. The protein operates within carbohydrate metabolism; tricarboxylic acid cycle; oxaloacetate from (S)-malate (quinone route): step 1/1. The polypeptide is Probable malate:quinone oxidoreductase (Neisseria meningitidis serogroup A / serotype 4A (strain DSM 15465 / Z2491)).